Consider the following 183-residue polypeptide: Small ribosomal subunit protein uS4c (183 aa).

The 62-residue stretch at 82 to 143 folds into the S4 RNA-binding domain; it reads MRLDNILFRL…KQRSKALIQN (62 aa).

This sequence belongs to the universal ribosomal protein uS4 family. As to quaternary structure, part of the 30S ribosomal subunit. Contacts protein S5. The interaction surface between S4 and S5 is involved in control of translational fidelity.

It localises to the plastid. The protein resides in the chloroplast. Functionally, one of the primary rRNA binding proteins, it binds directly to 16S rRNA where it nucleates assembly of the body of the 30S subunit. With S5 and S12 plays an important role in translational accuracy. In Gladiolus communis (Cornflag), this protein is Small ribosomal subunit protein uS4c (rps4).